The sequence spans 489 residues: MSHANLWIDGNWVQGQGKSWNTCNPVSQQVVWQGNEATAQQVEQACEAARQAFPQWATTSLTDRIAIIERFALLLEQNKEALAKIISQETSKPLWETLTEVQSMVAKVAISIRAYHQRTGKSITEMADGAASLRHRPHGVMAVFGPYNFPGHLPNGHIVPALIAGNVVVFKPSELTPWTAEATVKLWQQAGLPNAVLNLLQGSRETGIALAQSEHIDGVLFTGSASTGYQLHRQLAGAPEKILALEMGGNNALIIEDIDDIDAVVHLAIQSAFISAGQRCTCARRLIIKNGQAGDAFIQRFIEVARDLVIGDWDAEPQPFMGGVISVKAAEALLKAQQNLIDLGARSLLEMKQLRENSALVSPAILDVTAVPDIPDEEYFGPLTCIYRYDDFDEALKLANSTRFGLSVGLVSPKRALFERMLIEARAGIVNWNKPLTGASSAAPFGGVGASGNHRASAFYAADYCAWPMASLESEQLSLPEKLSPGIVL.

223-228 (GSASTG) is a binding site for NAD(+). Active-site residues include E246 and C280.

This sequence belongs to the aldehyde dehydrogenase family. AstD subfamily.

It carries out the reaction N-succinyl-L-glutamate 5-semialdehyde + NAD(+) + H2O = N-succinyl-L-glutamate + NADH + 2 H(+). It functions in the pathway amino-acid degradation; L-arginine degradation via AST pathway; L-glutamate and succinate from L-arginine: step 4/5. In terms of biological role, catalyzes the NAD-dependent reduction of succinylglutamate semialdehyde into succinylglutamate. The polypeptide is N-succinylglutamate 5-semialdehyde dehydrogenase (Acinetobacter baylyi (strain ATCC 33305 / BD413 / ADP1)).